Reading from the N-terminus, the 398-residue chain is Phospholipase C (398 aa).

A signal peptide spans 1–28; that stretch reads MKRKIYKLLICATIATSLWAVRTTKVYA. The Zn(2+) site is built by W29, H39, D84, H96, H154, D158, H164, H176, and E180. The 250-residue stretch at 29-278 folds into the Zn-dependent PLC domain; it reads WDGKADGTGT…HDVSDGKDSS (250 aa). Residues 275-283 form a linker region; the sequence is KDSSANKNV. In terms of domain architecture, PLAT spans 284-398; sequence NELVAYITTG…ISGNSTYNIK (115 aa). Ca(2+) contacts are provided by G299, T300, D301, D321, N322, G324, N325, D326, and D365.

The cofactor is Ca(2+). It depends on Zn(2+) as a cofactor.

Its subcellular location is the secreted. It catalyses the reaction a 1,2-diacyl-sn-glycero-3-phosphocholine + H2O = phosphocholine + a 1,2-diacyl-sn-glycerol + H(+). Its function is as follows. Bacterial hemolysins are exotoxins that attack blood cell membranes and cause cell rupture. Constitutes an essential virulence factor in gas gangrene. Binds to eukaryotic membranes where it hydrolyzes both phosphatidylcholine and sphingomyelin, causing cell rupture. The diacylglycerol produced can activate both the arachidonic acid pathway, leading to modulation of the inflammatory response cascade and thrombosis, and protein kinase C, leading to activation of eukaryotic phospholipases and further membrane damage. This is Phospholipase C (plc) from Clostridium perfringens.